A 276-amino-acid chain; its full sequence is MARQSAEPPTDDGQSAKEIVVITGGNTGIGFEVARQLLCNYGNRFYVIIGSRTLGKGHTAVAALKQQGYEAVQAVQLDVTKEASIAAAAKIIGEQFGRIDVLHVNAGVLLEPTDINAKPVPFSETIMETMRTNVAGAAATVEGFTPLLSIGSNPRVVFMTSTAASAQLMHQYSSMTTAPALSASKAAENIIMIYYYHKYPNWKVNACYPGYRDTAMMRRYNASSLSKAYRQPDPVEEGAYNAVRLSLLGKDGETGTFTEYKGVGEDGQRQYSALPW.

NADP(+) is bound by residues I29, S51, D78, and N105. Residue S161 is the Proton donor of the active site. NADP(+) contacts are provided by K185 and T214. The Lowers pKa of active site Tyr role is filled by K185.

This sequence belongs to the short-chain dehydrogenases/reductases (SDR) family.

It functions in the pathway mycotoxin biosynthesis. Functionally, short-chain dehydrogenase/reductase; part of the core atranone cluster (CAC) which products are predicted to catalyze most or all steps of mycotoxin atranone synthesis, starting from geranylgeranyl pyrophosphate (GGPP). The initial cyclization of GGPP to dolabellane is probably performed by the terpene cyclase ATR13. The Baeyer-Villiger oxidation near the end of the atranone synthesis, which converts atranones D and E to atranones F and G is predicted to be catalyzed by the monooxygenase ATR8. Of the CAC's other predicted gene products, the reducing PKS ATR6 might synthesize a polyketide chain. This polyketide is probably transferred onto the atranone backbone by the polyketide transferase ATR5. Other predicted CAC products include 4 oxygenases (ATR2, ATR3, ATR4, and ATR14), 3 short-chain reductases (ATR7, ATR9, and ATR10), and a methyltransferase (ATR12). These may all be involved in the various steps of atranone biosynthesis, although their specific roles must await experimental determination. This chain is Short-chain dehydrogenase/reductase ATR10, found in Stachybotrys chlorohalonatus (strain IBT 40285).